Consider the following 213-residue polypeptide: Nicolin-1 (213 aa).

In terms of assembly, part of the neuronal tubulin polyglutamylase complex which contains TPGS1, TPGS2, TTLL1, LRRC49 and NICN1. As to expression, high expression level is found in brain, testis, liver and kidney. Weak expression in spleen, leukocytes, small intestin and colon.

It localises to the nucleus. The polypeptide is Nicolin-1 (Nicn1) (Mus musculus (Mouse)).